The chain runs to 186 residues: Casparian strip membrane protein 1 (186 aa).

Topologically, residues 1-26 (MKGGSIELGEVSKNASTNKGVKRGLS) are cytoplasmic. Residues 27–47 (IMDFILRIIAGVATLASAVAM) form a helical membrane-spanning segment. Residues 48 to 72 (GTTDERLPFATSFVQFRAEYDDLPS) lie on the Extracellular side of the membrane. A helical transmembrane segment spans residues 73–93 (FVFFVLANSIVCGYLALSLIL). Topologically, residues 94–107 (SILHIVRSTAVKSR) are cytoplasmic. The chain crosses the membrane as a helical span at residues 108–128 (ILLIVLDMVMMGLLAAAASAA). The Extracellular portion of the chain corresponds to 129 to 157 (ASIVYIAHYGNTQANWFPICQQYNSFCER). A helical transmembrane segment spans residues 158 to 178 (ISGSLIGSYIAVALFIIIILL). Topologically, residues 179–186 (SQSAISRN) are cytoplasmic.

This sequence belongs to the Casparian strip membrane proteins (CASP) family. Homodimer and heterodimers.

The protein localises to the cell membrane. Functionally, regulates membrane-cell wall junctions and localized cell wall deposition. Required for establishment of the Casparian strip membrane domain (CSD) and the subsequent formation of Casparian strips, a cell wall modification of the root endodermis that determines an apoplastic barrier between the intraorganismal apoplasm and the extraorganismal apoplasm and prevents lateral diffusion. This Medicago truncatula (Barrel medic) protein is Casparian strip membrane protein 1.